A 241-amino-acid polypeptide reads, in one-letter code: Triosephosphate isomerase (241 aa).

Substrate is bound at residue 9 to 11; that stretch reads NWK. His-96 acts as the Electrophile in catalysis. Glu-165 (proton acceptor) is an active-site residue. Substrate-binding positions include Gly-171, Ser-204, and 225-226; that span reads GG.

The protein belongs to the triosephosphate isomerase family. Homodimer.

Its subcellular location is the cytoplasm. It catalyses the reaction D-glyceraldehyde 3-phosphate = dihydroxyacetone phosphate. The protein operates within carbohydrate biosynthesis; gluconeogenesis. It functions in the pathway carbohydrate degradation; glycolysis; D-glyceraldehyde 3-phosphate from glycerone phosphate: step 1/1. In terms of biological role, involved in the gluconeogenesis. Catalyzes stereospecifically the conversion of dihydroxyacetone phosphate (DHAP) to D-glyceraldehyde-3-phosphate (G3P). The polypeptide is Triosephosphate isomerase (Prochlorococcus marinus (strain MIT 9312)).